The following is an 85-amino-acid chain: Large ribosomal subunit protein bL31B (85 aa).

It belongs to the bacterial ribosomal protein bL31 family. Type B subfamily. In terms of assembly, part of the 50S ribosomal subunit.

The protein is Large ribosomal subunit protein bL31B of Staphylococcus epidermidis (strain ATCC 35984 / DSM 28319 / BCRC 17069 / CCUG 31568 / BM 3577 / RP62A).